The following is a 78-amino-acid chain: Major outer membrane lipoprotein Lpp (78 aa).

The signal sequence occupies residues 1–20 (MNRTKLVLGAVILGSTLLAG). Cysteine 21 is lipidated: N-palmitoyl cysteine. A lipid anchor (S-diacylglycerol cysteine) is attached at cysteine 21. 2 consecutive repeats follow at residues 24–34 (NAKIDQLSSDV) and 38–48 (NAKVDQLSNDV). A coiled-coil region spans residues 27–75 (IDQLSSDVQTLNAKVDQLSNDVNAIRSDVQAAKDDAARANQRLDNQVRT). Lysine 78 carries the N6-murein peptidoglycan lysine modification.

The protein belongs to the Lpp family. In terms of assembly, homotrimer.

The protein localises to the cell outer membrane. The protein resides in the secreted. It is found in the cell wall. Functionally, a highly abundant outer membrane lipoprotein that controls the distance between the inner and outer membranes. The only protein known to be covalently linked to the peptidoglycan network (PGN). Also non-covalently binds the PGN. The link between the cell outer membrane and PGN contributes to maintenance of the structural and functional integrity of the cell envelope, and maintains the correct distance between the PGN and the outer membrane. The polypeptide is Major outer membrane lipoprotein Lpp (Pectobacterium atrosepticum (strain SCRI 1043 / ATCC BAA-672) (Erwinia carotovora subsp. atroseptica)).